A 230-amino-acid chain; its full sequence is Sugar fermentation stimulation protein homolog (230 aa).

It belongs to the SfsA family.

This Clostridium botulinum (strain Okra / Type B1) protein is Sugar fermentation stimulation protein homolog.